Reading from the N-terminus, the 1573-residue chain is Soluble scavenger receptor cysteine-rich domain-containing protein SSC5D (1573 aa).

Positions 1-16 (MRVLACLLAALVGIQA) are cleaved as a signal peptide. An SRCR 1 domain is found at 20 to 120 (LRLADGPHGC…HEEDAGVVCA (101 aa)). 3 disulfides stabilise this stretch: Cys45–Cys109, Cys58–Cys119, and Cys89–Cys99. A disordered region spans residues 153-192 (EPLVTHAPRPAGNPQNASRKKSPRPKQAKSTRAPLLTTGA). An N-linked (GlcNAc...) asparagine glycan is attached at Asn168. Over residues 170–181 (SRKKSPRPKQAK) the composition is skewed to basic residues. SRCR domains follow at residues 198-298 (LRLV…LVCT) and 304-404 (LRLA…AVCD). 6 disulfide bridges follow: Cys223–Cys287, Cys236–Cys297, Cys267–Cys277, Cys329–Cys393, Cys342–Cys403, and Cys373–Cys383. 2 N-linked (GlcNAc...) asparagine glycosylation sites follow: Asn376 and Asn420. The interval 412–465 (PPTAPTDSNNSTPREAASRPPSTMTSQAPGTAGVSPPPASPTVLWEPGPEAGSP) is disordered. The segment covering 431 to 440 (PPSTMTSQAP) has biased composition (polar residues). The SRCR 4 domain occupies 467-568 (LRLVAGPSKC…HNEDVGVTCT (102 aa)). 3 disulfide bridges follow: Cys492/Cys557, Cys505/Cys567, and Cys537/Cys547. Positions 614–769 (EKTTTKAPGK…SVSTTGESGL (156 aa)) are disordered. Positions 626–637 (KSTKKWVTKNAK) are enriched in basic residues. Positions 654 to 671 (AQSPPDLTSQTTAALTTE) are enriched in polar residues. Over residues 672–685 (ASRRPTSEFTRRPT) the composition is skewed to basic and acidic residues. Polar residues-rich tracts occupy residues 687–702 (EAPQ…TLTP) and 711–735 (KTMA…SIPQ). An SRCR 5 domain is found at 772–872 (VRLADGPNRC…HEEDVGLTCT (101 aa)). Cystine bridges form between Cys797–Cys861, Cys810–Cys871, and Cys841–Cys851. 2 disordered regions span residues 895–1475 (KGTT…PCVA) and 1554–1573 (MPAP…RGDV). A compositionally biased stretch (basic and acidic residues) spans 924-934 (RLPDTGSKDGY). Pro residues-rich tracts occupy residues 1004 to 1020 (PPTP…PPGP) and 1083 to 1093 (TPEPSPTPLPT). A compositionally biased stretch (polar residues) spans 1101–1140 (DPSTPSEVTSLSPTSEQVPESDTTPDLDTTPYSSTVSEYS). Residues 1144 to 1160 (DPSPSPHPTTTPDPTMA) show a composition bias toward pro residues. Composition is skewed to low complexity over residues 1161-1175 (PDPI…TPHF) and 1185-1277 (PHPT…MPHP). Over residues 1278-1328 (TTTPHPTTTPHPTTTPHPTTTPHPTMTPDPTTTPYPTTTPDPTTTPHPTTP) the composition is skewed to pro residues. Polar residues-rich tracts occupy residues 1335–1354 (VITT…SPTL) and 1364–1380 (PQLT…TSQI). A compositionally biased stretch (low complexity) spans 1381–1401 (PTLEPSPALESSPSRSSTATS). A compositionally biased stretch (pro residues) spans 1464–1475 (GQSPGPHGPCVA).

In terms of assembly, interacts with LGALS1 and laminin. Highly expressed in monocytes/macrophages and T-lymphocytes. Highly expressed in placenta and spleen, and also detected at lower levels in colon, and more weakly in lung, heart and kidney.

It localises to the secreted. It is found in the cytoplasm. Binds to extracellular matrix proteins. Binds to pathogen-associated molecular patterns (PAMPs) present on the cell walls of Gram-positive and Gram-negative bacteria and fungi, behaving as a pattern recognition receptor (PRR). Induces bacterial and fungal aggregation and subsequent inhibition of PAMP-induced cytokine release. Does not possess intrinsic bactericidal activity. May play a role in the innate defense and homeostasis of certain epithelial surfaces. This chain is Soluble scavenger receptor cysteine-rich domain-containing protein SSC5D (SSC5D), found in Homo sapiens (Human).